Consider the following 385-residue polypeptide: D-alanyl-D-alanine-carboxypeptidase/endopeptidase AmpH (385 aa).

The N-terminal stretch at 1–21 is a signal peptide; the sequence is MKRSLLFSAVLCAASLTSVHA.

It belongs to the beta-lactamase family.

The protein localises to the cell inner membrane. Inhibited by cefmetazole. Functionally, hydrolyzes the cross-linked dimers tetrapentapeptide (D45) and tetratetrapeptide (D44). Removes the terminal D-alanine from muropeptides and disaccharide pentapeptide M5 with a C-terminal D-Ala-D-Ala dipeptide. Associated with recycling and remodeling of peptidoglycan (PG). This is D-alanyl-D-alanine-carboxypeptidase/endopeptidase AmpH (ampH) from Escherichia coli O157:H7.